The primary structure comprises 168 residues: Phosphopantetheine adenylyltransferase (168 aa).

Ser-8 is a substrate binding site. ATP is bound by residues 8–9 and His-16; that span reads SF. Lys-40, Ala-72, and Arg-86 together coordinate substrate. Residues 87-89, Glu-97, and 122-128 contribute to the ATP site; these read GLR and YSFLSSS.

It belongs to the bacterial CoaD family. Homohexamer. Requires Mg(2+) as cofactor.

Its subcellular location is the cytoplasm. The catalysed reaction is (R)-4'-phosphopantetheine + ATP + H(+) = 3'-dephospho-CoA + diphosphate. Its pathway is cofactor biosynthesis; coenzyme A biosynthesis; CoA from (R)-pantothenate: step 4/5. Its function is as follows. Reversibly transfers an adenylyl group from ATP to 4'-phosphopantetheine, yielding dephospho-CoA (dPCoA) and pyrophosphate. The protein is Phosphopantetheine adenylyltransferase of Trichodesmium erythraeum (strain IMS101).